The sequence spans 204 residues: MAYMNRSDLDKLKHENIFSGNIIEDAKEFVFGSRKIYTDSVDDLIELYSLAKYLNNENLKDVVIERMDYVCKYIGKDNWSTIYSFYKENGLRNSFLRQYINNNIEEICNTDQFLKLDVDSVCDILDNDEIVVTREYTILNMVLRWLENKRVNIDDFTKVMFVIRFKFITYSELTNAIKKIAPEYRQCLQDLYHMKITRPRHFDN.

The region spanning 95-177 is the BACK domain; it reads FLRQYINNNI…ITYSELTNAI (83 aa).

This sequence belongs to the orthopoxvirus OPG030 family.

The sequence is that of Protein OPG030 (OPG30) from Bos taurus (Bovine).